We begin with the raw amino-acid sequence, 1443 residues long: MVFDTETEKGKRIWALSQFLVKKNILDHNELHQLNNRIELVYLENDRENALFLVALTLKKPLTIDIWNALYEGFQDAEGAELRITFQEDATFFKDGSTKSSVTLAIIKDYFKSFFGKDKKYRILLEQELTHPNFLSYSNHELKANCQSQELDQWLIEQRQAFIKWMHQAGFTHFGFVSLFNPPAEKQLKVKSMKVSKYDKQFETEVFSTEFVPIHKINQQMDEIKLMGQIFELKDFPGYNNLRNTLNIYVTDFQLGGSLILKWFYKDPKTIEGIKIGTWVKATVKVERDAKTQLLQGIIKEISPIETPAYYRRPDQDKQKRVELVFHTKMSAFDGINSVQEYAQFAKERDWKTIAVTDKDNIHIYPTLYEVAKKYGLKAIYGLECNLIDDHIKIVSNPDKTKLKDATFVIFDIETTGLHGRYDSVIEFAGIKVKHNREVERMQFFLKIDGPLPAAVTEITKITQAQLEDGMEQQAGLEKLRAWLDGCVMVAHNGLSFDLPFLQTQFEKYNIAPLTNPLIDTLALSWALNPGFASHTLSNICAKLKFDFDDERLHRADYDTQALKKVFDYFKEQVELMGITNLEQLDQELNQQCHFELLKRTFTNTGIIYIKSQSGFAKLYELLSIALTDNNATRPLVLTSTLQKFAKSFVITDNPVQGDIFKAALTKPLKELEAAIKRVDFVLIAPPGAYAGYTIREGLKKEAIPNAIKLVVDTAQRLNKLVAVASDAYFIHPWENEYYKAIVCAKGLGGRWHRHFNYKEREQRVPNVFVRTTGEMLNEMSFLGEQLAYELVVENTNKLAKQLTADDLVPVQTKLQPPVIEGSNENLAAKTWSQAKAIYGDPLPKLIEQRIQEELKAIIDNGFGIIYWISHLLVKQSVQDGYFVGPRGSIGSSLVANLIGISEINPLVPHYLCESCQYFEVNEEVDDGYDLMVRDCPKCGAKAAFKGDGHNIPFATFMGFAGDKIPDIDLNFSSEYQAKAHAYVRELFGEQYTFRAGTIATVAEKTAYGYARNYFEIIKQTELATAPEIERFKQKLVGIKRTTGQHPGGIMIFPNHKSVYEFTPCGYPADDTSSDWKTTHFEYDALGNTILKLDILGQDDPTMLKHLGDLTHVNPQNIPRFDKKLTEMFWSVNPLKLKPHYLDEPTGAIGIPEFGTKFVRKILEQTKPKGFGDLIRVSGLSHGKNVWADNAQKILKDQNLSLKDVIACRDDIMLYLIHKGMQAKDAFEIMEKVRKGIALNAKEVQLMQSNGVEQHWINSCLKISYLFPKAHAAAYVLMAWRIAWFKLYHPLSYYACLLSFKLKEHDVSGFKSGVSFVKQKLEELNTLYRIKRIKPKEAELLTSYEVYLEMMARGIKLEQISLTHSHATRFVEHNGMLIAPFITIPGMGEAVANSIIEARNEKPFSSLDDFKKRTKITKKHIEAFTQMQLLDEFREQDNQKKLF.

The Exonuclease domain occupies 408–567; sequence FVIFDIETTG…YDTQALKKVF (160 aa).

It belongs to the DNA polymerase type-C family. PolC subfamily.

It is found in the cytoplasm. It carries out the reaction DNA(n) + a 2'-deoxyribonucleoside 5'-triphosphate = DNA(n+1) + diphosphate. Its function is as follows. Required for replicative DNA synthesis. This DNA polymerase also exhibits 3' to 5' exonuclease activity. This Mycoplasma pneumoniae (strain ATCC 29342 / M129 / Subtype 1) (Mycoplasmoides pneumoniae) protein is DNA polymerase III PolC-type.